The sequence spans 311 residues: Mitoferrin (311 aa).

3 Solcar repeats span residues 15–102 (HSIP…MKSF), 111–195 (EHTL…WQQV), and 202–302 (YDPK…FKFM). The next 6 helical transmembrane spans lie at 17–36 (IPVH…CVMF), 77–96 (GVNA…FTVY), 112–132 (HTLA…AVMN), 170–189 (SYTT…FMGY), 204–223 (PKSH…AVTT), and 277–296 (GLQA…WSVY).

Belongs to the mitochondrial carrier (TC 2.A.29) family.

It localises to the mitochondrion inner membrane. Functionally, mitochondrial iron transporter that mediates iron uptake. Probably required for heme synthesis of hemoproteins and Fe-S cluster assembly. In Caenorhabditis briggsae, this protein is Mitoferrin.